Reading from the N-terminus, the 956-residue chain is Probable hypoxanthine oxidase XdhD (956 aa).

The Mo-molybdopterin site is built by Gln414, Phe445, and Ala727.

This sequence belongs to the xanthine dehydrogenase family. [2Fe-2S] cluster serves as cofactor. Requires Mo-molybdopterin as cofactor.

In terms of biological role, probably has no xanthine dehydrogenase activity; however deletion results in increased adenine sensitivity, suggesting that this protein contributes to the conversion of adenine to guanine nucleotides during purine salvage. The polypeptide is Probable hypoxanthine oxidase XdhD (xdhD) (Escherichia coli (strain K12)).